The primary structure comprises 648 residues: MPSKSACLRHTEAPGQLEGRMLQGQLSNPEKKLIPTSASLPAADSQSSQTNSMPPLSMPAKPSNQNLQAKANLITPQPPIRPKLERTLSLDDKGWRRRRFRGSQEDLTVQNGASPCRGSLQDSVAQSPAYSRPLPCLSTSLQEIPKPRRATGSEGGSPSLWSDCLSGMISTSLDLLHREAASGGPHSRLASLRATHTPPAMDLNIASSSLRTANKVDPEHTDYKLRMQNRLVRAHSNLGPSRPRSPLAGDDHSIHSARSSFSLLAPIRTKDIRSRSYLEGSLLASGALLGADELARYFPDRNMALFVATWNMQGQKELPASLDEFLLPTEADYTQDLYVIGVQEGCSDRREWETRLQETLGPQYVLLSSAAHGVLYMSLFIRRDLIWFCSEVEYSTVTTRIVSQIKTKGALGVSFTFFGTSFLFITSHFTSGDGKVAERLLDYNRTIQALALPRNVPDTNPYRSSAGDVTTRFDEVFWFGDFNFRLSGGRVAVEAFLKQDPEVDVLALLQHDQLTREMKKGSIFKGFEEAEIHFLPSYKFDIGKDTYDSTSKQRTPSYTDRVLYKSRHKGDICPMKYSSCPGIKTSDHRPVYGLFRVKVRPGRDNIPLAAGKFDRELYLIGIKRRISKEIQRQEALKSQSSSAVCTVS.

Residues 1 to 64 are disordered; the sequence is MPSKSACLRH…PLSMPAKPSN (64 aa). Over residues 36–54 the composition is skewed to polar residues; it reads TSASLPAADSQSSQTNSMP. 2 repeat units span residues 59–62 and 76–79. The 4 X 4 AA repeats of P-X-X-P stretch occupies residues 59-243; the sequence is PAKPSNQNLQ…AHSNLGPSRP (185 aa). Positions 99-158 are disordered; sequence RFRGSQEDLTVQNGASPCRGSLQDSVAQSPAYSRPLPCLSTSLQEIPKPRRATGSEGGSP. Phosphoserine is present on S103. The segment covering 120–129 has biased composition (polar residues); sequence LQDSVAQSPA. Repeat 3 spans residues 147–150; that stretch reads PRRA. T197 is modified (phosphothreonine). Repeat 4 spans residues 240–243; it reads PSRP. Phosphoserine is present on residues S245 and S260. C645 carries the cysteine methyl ester modification. C645 carries the S-farnesyl cysteine lipid modification. The propeptide at 646–648 is removed in mature form; it reads TVS.

This sequence belongs to the inositol 1,4,5-trisphosphate 5-phosphatase type IV family. Interacts (when prenylated) with PDE6D; this is important for normal location in cilia.

The protein resides in the cytoplasm. It localises to the cytoskeleton. Its subcellular location is the cilium axoneme. It is found in the golgi apparatus. The protein localises to the golgi stack membrane. The protein resides in the cell membrane. It localises to the cell projection. Its subcellular location is the ruffle. It is found in the nucleus. The enzyme catalyses a 1,2-diacyl-sn-glycero-3-phospho-(1D-myo-inositol-4,5-bisphosphate) + H2O = a 1,2-diacyl-sn-glycero-3-phospho-(1D-myo-inositol 4-phosphate) + phosphate. It carries out the reaction a 1,2-diacyl-sn-glycero-3-phospho-(1D-myo-inositol-3,4,5-trisphosphate) + H2O = a 1,2-diacyl-sn-glycero-3-phospho-(1D-myo-inositol-3,4-bisphosphate) + phosphate. It catalyses the reaction a 1,2-diacyl-sn-glycero-3-phospho-(1D-myo-inositol-3,5-bisphosphate) + H2O = a 1,2-diacyl-sn-glycero-3-phospho-(1D-myo-inositol-3-phosphate) + phosphate. Functionally, phosphatidylinositol (PtdIns) phosphatase that specifically hydrolyzes the 5-phosphate of phosphatidylinositol-3,4,5-trisphosphate (PtdIns(3,4,5)P3), phosphatidylinositol 4,5-bisphosphate PtdIns (4,5)P2 and phosphatidylinositol 3,5-bisphosphate (PtdIns(3,5)P2). Specific for lipid substrates, inactive towards water soluble inositol phosphates. Plays an essential role in the primary cilium by controlling ciliary growth and phosphoinositide 3-kinase (PI3K) signaling and stability. The protein is Phosphatidylinositol polyphosphate 5-phosphatase type IV (Inpp5e) of Rattus norvegicus (Rat).